The chain runs to 145 residues: D-aminoacyl-tRNA deacylase (145 aa).

A Gly-cisPro motif, important for rejection of L-amino acids motif is present at residues 137 to 138 (GP).

This sequence belongs to the DTD family. Homodimer.

It is found in the cytoplasm. It catalyses the reaction glycyl-tRNA(Ala) + H2O = tRNA(Ala) + glycine + H(+). The enzyme catalyses a D-aminoacyl-tRNA + H2O = a tRNA + a D-alpha-amino acid + H(+). In terms of biological role, an aminoacyl-tRNA editing enzyme that deacylates mischarged D-aminoacyl-tRNAs. Also deacylates mischarged glycyl-tRNA(Ala), protecting cells against glycine mischarging by AlaRS. Acts via tRNA-based rather than protein-based catalysis; rejects L-amino acids rather than detecting D-amino acids in the active site. By recycling D-aminoacyl-tRNA to D-amino acids and free tRNA molecules, this enzyme counteracts the toxicity associated with the formation of D-aminoacyl-tRNA entities in vivo and helps enforce protein L-homochirality. The protein is D-aminoacyl-tRNA deacylase of Pseudomonas fluorescens (strain ATCC BAA-477 / NRRL B-23932 / Pf-5).